A 169-amino-acid polypeptide reads, in one-letter code: Cytochrome c-type biogenesis protein CcmE (169 aa).

The Cytoplasmic segment spans residues 1 to 7 (MTRKSRR). Residues 8–28 (LILIAACGAVLALALGLILSA) traverse the membrane as a helical; Signal-anchor for type II membrane protein segment. Over 29–169 (MSGSIVFFRS…DATLGQRSER (141 aa)) the chain is Periplasmic. 2 residues coordinate heme: His122 and Tyr126. A disordered region spans residues 135 to 169 (LKAQGRWQEGGGKEAPKDAAKPASADATLGQRSER). The segment covering 145–154 (GGKEAPKDAA) has biased composition (basic and acidic residues).

This sequence belongs to the CcmE/CycJ family.

It is found in the cell inner membrane. In terms of biological role, heme chaperone required for the biogenesis of c-type cytochromes. Transiently binds heme delivered by CcmC and transfers the heme to apo-cytochromes in a process facilitated by CcmF and CcmH. The protein is Cytochrome c-type biogenesis protein CcmE of Methylorubrum populi (strain ATCC BAA-705 / NCIMB 13946 / BJ001) (Methylobacterium populi).